A 415-amino-acid polypeptide reads, in one-letter code: Esterase FrsA (415 aa).

Belongs to the FrsA family.

The catalysed reaction is a carboxylic ester + H2O = an alcohol + a carboxylate + H(+). In terms of biological role, catalyzes the hydrolysis of esters. This is Esterase FrsA from Serratia proteamaculans (strain 568).